The primary structure comprises 434 residues: MPDEDLQDILSQISRDNIESTIRKLVSFGTRHTLSSQTDPVRGVGAARTWLTAKFQEAADESEGKMTVDWNSFIKYPGDNERIIFPVNITTIVATLKGSEDPDRYYLTGGHYDSRNSNPIDYQGDAPGAVDDASGVAVSLELARIFAHYKPKSTIVFTAFAGEEQGLLGAQNLAQTYKNASVNLAAMINLDMVGNSKAEDGTTDPHNIRLFCQGTPLTENATTMTSRLSIGGDNDSPARNLGRFIYEVASNVWTEMTVRVIYRLDRYSRGGDHRPFLEAGYTGVRFVQPNEDYTQQHQNVTVRNGKQYGDLTQWLDFEYNTRAAKVVATTMWSLANAPASPTNVGINTTMSDNFSQFKWDAPKGLPVEGYEILYRETIEPHWTNVIDVGNVTWYNLTSATIHKDNVIFGVRSVGKGGYKSPAVLPFPFGCARNC.

An N-linked (GlcNAc...) asparagine glycan is attached at Asn-88. Residues His-111, Asp-131, and Glu-164 each coordinate Zn(2+). N-linked (GlcNAc...) asparagine glycosylation is present at Asn-179. Asp-191 serves as a coordination point for Zn(2+). N-linked (GlcNAc...) asparagine glycosylation is found at Asn-220, Asn-299, Asn-347, Asn-353, Asn-390, and Asn-395. Residues 340-433 (SPTNVGINTT…LPFPFGCARN (94 aa)) enclose the Fibronectin type-III domain.

It belongs to the peptidase M28 family. M28B subfamily. Requires Zn(2+) as cofactor.

The protein resides in the secreted. The chain is Probable zinc metalloprotease PTRG_04772 from Pyrenophora tritici-repentis (strain Pt-1C-BFP) (Wheat tan spot fungus).